Here is a 337-residue protein sequence, read N- to C-terminus: tRNA-cytidine(32) 2-sulfurtransferase (337 aa).

A PP-loop motif motif is present at residues 71-76 (SGGKDS). Cys146, Cys149, and Cys237 together coordinate [4Fe-4S] cluster.

It belongs to the TtcA family. In terms of assembly, homodimer. It depends on Mg(2+) as a cofactor. The cofactor is [4Fe-4S] cluster.

The protein localises to the cytoplasm. The catalysed reaction is cytidine(32) in tRNA + S-sulfanyl-L-cysteinyl-[cysteine desulfurase] + AH2 + ATP = 2-thiocytidine(32) in tRNA + L-cysteinyl-[cysteine desulfurase] + A + AMP + diphosphate + H(+). It functions in the pathway tRNA modification. Functionally, catalyzes the ATP-dependent 2-thiolation of cytidine in position 32 of tRNA, to form 2-thiocytidine (s(2)C32). The sulfur atoms are provided by the cysteine/cysteine desulfurase (IscS) system. The protein is tRNA-cytidine(32) 2-sulfurtransferase of Burkholderia vietnamiensis (strain G4 / LMG 22486) (Burkholderia cepacia (strain R1808)).